A 318-amino-acid polypeptide reads, in one-letter code: 2-keto-3-deoxygluconate permease (318 aa).

The next 10 helical transmembrane spans lie at 10-30, 42-62, 82-102, 109-129, 139-159, 163-183, 201-221, 224-244, 257-277, and 289-309; these read LPGG…TLWP, GLIS…GATI, IAVA…GGVS, LSVL…YAAL, AGAV…LILG, LASF…LGFA, TLVP…TIAH, TSGV…LLLA, VAAS…AGMA, and ALVA…TALY.

Belongs to the KdgT transporter family.

It is found in the cell inner membrane. It carries out the reaction 2-dehydro-3-deoxy-D-gluconate(in) + H(+)(in) = 2-dehydro-3-deoxy-D-gluconate(out) + H(+)(out). In terms of biological role, catalyzes the proton-dependent uptake of 2-keto-3-deoxygluconate (KDG) into the cell. The chain is 2-keto-3-deoxygluconate permease from Xanthomonas axonopodis pv. citri (strain 306).